We begin with the raw amino-acid sequence, 67 residues long: uncharacterized protein (67 aa).

This is an uncharacterized protein from Measles virus (strain Halle) (MeV).